The primary structure comprises 621 residues: Probable potassium transport system protein Kup 2 (621 aa).

Helical transmembrane passes span 9 to 29, 48 to 68, 101 to 121, 136 to 156, 164 to 184, 210 to 230, 246 to 266, 275 to 295, 336 to 356, 364 to 384, 393 to 413, and 418 to 438; these read MAGLTLAALGVVYGDIGTSPL, IFGILSLIFWSLIFVVSVKYV, IVLLGLFGAALFYGDAIITPA, SGMEAYVLPMAVGVLVGLFLL, VGLMFGPVMMVWFAILGILGL, GFHAFLTLGSVVLALTGAEAL, WFSLVLPGLGLNYFGQGALLM, PFFLLAPDWALLPMIALATLA, IYMPFINWALLVAVLVVVLTF, AAYGIAVTGTMLITTMLFFVV, LPLALGITLLFGVIDTAFFAA, and VADGGWLPLVMGMAIFTLMST.

This sequence belongs to the HAK/KUP transporter (TC 2.A.72) family.

It localises to the cell inner membrane. It catalyses the reaction K(+)(in) + H(+)(in) = K(+)(out) + H(+)(out). Functionally, transport of potassium into the cell. Likely operates as a K(+):H(+) symporter. The sequence is that of Probable potassium transport system protein Kup 2 from Chromobacterium violaceum (strain ATCC 12472 / DSM 30191 / JCM 1249 / CCUG 213 / NBRC 12614 / NCIMB 9131 / NCTC 9757 / MK).